The sequence spans 396 residues: NADH-quinone oxidoreductase subunit D (396 aa).

This sequence belongs to the complex I 49 kDa subunit family. As to quaternary structure, NDH-1 is composed of 14 different subunits. Subunits NuoB, C, D, E, F, and G constitute the peripheral sector of the complex.

The protein resides in the cell inner membrane. The enzyme catalyses a quinone + NADH + 5 H(+)(in) = a quinol + NAD(+) + 4 H(+)(out). Functionally, NDH-1 shuttles electrons from NADH, via FMN and iron-sulfur (Fe-S) centers, to quinones in the respiratory chain. The immediate electron acceptor for the enzyme in this species is believed to be ubiquinone. Couples the redox reaction to proton translocation (for every two electrons transferred, four hydrogen ions are translocated across the cytoplasmic membrane), and thus conserves the redox energy in a proton gradient. The polypeptide is NADH-quinone oxidoreductase subunit D (Brucella melitensis biotype 1 (strain ATCC 23456 / CCUG 17765 / NCTC 10094 / 16M)).